Reading from the N-terminus, the 187-residue chain is uncharacterized protein (187 aa).

Residues 127–172 (KQPQVTLTQLQEELDEAKTRLALKEKELLEALSEISKLRLQLSNQL) are a coiled coil.

This is an uncharacterized protein from Tomato torrado virus (isolate Solanum lycopersicum/Spain/PRIToTV0301/-) (ToTV).